Consider the following 149-residue polypeptide: Nucleoside diphosphate kinase (149 aa).

6 residues coordinate ATP: Lys9, Phe57, Arg85, Thr91, Arg102, and Asn112. The Pros-phosphohistidine intermediate role is filled by His115.

Belongs to the NDK family. As to quaternary structure, homotetramer. The cofactor is Mg(2+).

Its subcellular location is the cytoplasm. The catalysed reaction is a 2'-deoxyribonucleoside 5'-diphosphate + ATP = a 2'-deoxyribonucleoside 5'-triphosphate + ADP. It catalyses the reaction a ribonucleoside 5'-diphosphate + ATP = a ribonucleoside 5'-triphosphate + ADP. Functionally, major role in the synthesis of nucleoside triphosphates other than ATP. The ATP gamma phosphate is transferred to the NDP beta phosphate via a ping-pong mechanism, using a phosphorylated active-site intermediate. This is Nucleoside diphosphate kinase from Pelotomaculum thermopropionicum (strain DSM 13744 / JCM 10971 / SI).